The sequence spans 385 residues: MLRVSENGLRFLLKCHSTNVSMFNRLLSTQIKEGRSSIDDAGIIPDGTINERPNHYIEGITKGSDLDLLEKGIRKTDEMTSNFTNYMYKFHRLPPNYGSNQLITIDKELQKELDGVMSSFKAPCRFVFGYGSGVFEQAGYSKSHSKPQIDIILGVTYPSHFHSINMRQNPQHYSSLKYFGSEFVSKFQQIGAGVYFNPFANINGHDVKYGVVSMETLLKDIATWNTFYLAGRLQKPVKILKNDLRVQYWNQLNLKAAATLAKHYTLEKNNNKFDEFQFYKEITALSYAGDIRYKLGGENPDKVNNIVTKNFERFQEYYKPIYKEVVLNDSFYLPKGFTLKNTQRLLLSRISKSSALQTIKGVFTAGITKSIKYAWAKKLKSMRRS.

This sequence belongs to the TAM41 family. Requires Mg(2+) as cofactor. Co(2+) is required as a cofactor. It depends on Cu(2+) as a cofactor.

It localises to the mitochondrion inner membrane. It carries out the reaction a 1,2-diacyl-sn-glycero-3-phosphate + CTP + H(+) = a CDP-1,2-diacyl-sn-glycerol + diphosphate. Its pathway is phospholipid metabolism; CDP-diacylglycerol biosynthesis; CDP-diacylglycerol from sn-glycerol 3-phosphate: step 3/3. Its function is as follows. Catalyzes the formation of CDP-diacylglycerol (CDP-DAG) from phosphatidic acid (PA) in the mitochondrial inner membrane. Required for the biosynthesis of the dimeric phospholipid cardiolipin, which stabilizes supercomplexes of the mitochondrial respiratory chain in the mitochondrial inner membrane. This chain is Phosphatidate cytidylyltransferase, mitochondrial (TAM41), found in Saccharomyces cerevisiae (strain ATCC 204508 / S288c) (Baker's yeast).